Consider the following 331-residue polypeptide: Isopentenyl-diphosphate delta-isomerase (331 aa).

Residue 4–5 participates in substrate binding; it reads RK. FMN is bound by residues 59–61, Ser89, and Asn116; that span reads AMT. Gln146 contacts substrate. Glu147 contacts Mg(2+). FMN-binding positions include Lys178, Ser203, Thr208, 252–254, and 273–274; these read GIR and SR.

It belongs to the IPP isomerase type 2 family. Homooctamer. Dimer of tetramers. Requires FMN as cofactor. NADPH is required as a cofactor. The cofactor is Mg(2+).

Its subcellular location is the cytoplasm. The catalysed reaction is isopentenyl diphosphate = dimethylallyl diphosphate. Its function is as follows. Involved in the biosynthesis of isoprenoids. Catalyzes the 1,3-allylic rearrangement of the homoallylic substrate isopentenyl (IPP) to its allylic isomer, dimethylallyl diphosphate (DMAPP). The chain is Isopentenyl-diphosphate delta-isomerase from Streptococcus mutans serotype c (strain ATCC 700610 / UA159).